The sequence spans 562 residues: NAD-dependent malic enzyme (562 aa).

Tyr-101 serves as the catalytic Proton donor. Residue Arg-154 coordinates NAD(+). Lys-172 (proton acceptor) is an active-site residue. Glu-243, Asp-244, and Asp-267 together coordinate a divalent metal cation. NAD(+) is bound by residues Asp-267 and Asn-415.

This sequence belongs to the malic enzymes family. As to quaternary structure, homotetramer. Mg(2+) is required as a cofactor. It depends on Mn(2+) as a cofactor.

The catalysed reaction is (S)-malate + NAD(+) = pyruvate + CO2 + NADH. It carries out the reaction oxaloacetate + H(+) = pyruvate + CO2. The sequence is that of NAD-dependent malic enzyme from Shewanella pealeana (strain ATCC 700345 / ANG-SQ1).